Consider the following 160-residue polypeptide: General odorant-binding protein 2 (160 aa).

Residues 1–19 (MGYKLLLMYIAIVIDSVIG) form the signal peptide. 3 disulfides stabilise this stretch: Cys38–Cys73, Cys69–Cys127, and Cys116–Cys136.

The protein belongs to the PBP/GOBP family. As to expression, antenna.

Present in the aqueous fluid surrounding olfactory sensory dendrites and are thought to aid in the capture and transport of hydrophobic odorants into and through this fluid. The sequence is that of General odorant-binding protein 2 from Antheraea pernyi (Chinese oak silk moth).